The chain runs to 316 residues: HPr kinase/phosphorylase (316 aa).

Residues histidine 143 and lysine 164 contribute to the active site. 158 to 165 (GEAGSGKS) contributes to the ATP binding site. Serine 165 lines the Mg(2+) pocket. Aspartate 182 acts as the Proton acceptor; for phosphorylation activity. Proton donor; for dephosphorylation activity in catalysis. An important for the catalytic mechanism of both phosphorylation and dephosphorylation region spans residues 206 to 215 (LEVRGLGVLN). Glutamate 207 serves as a coordination point for Mg(2+). Arginine 251 is an active-site residue. Residues 272–277 (PVMPGR) form an important for the catalytic mechanism of dephosphorylation region.

This sequence belongs to the HPrK/P family. As to quaternary structure, homohexamer. Mg(2+) is required as a cofactor.

The enzyme catalyses [HPr protein]-L-serine + ATP = [HPr protein]-O-phospho-L-serine + ADP + H(+). It catalyses the reaction [HPr protein]-O-phospho-L-serine + phosphate + H(+) = [HPr protein]-L-serine + diphosphate. Its function is as follows. Catalyzes the ATP- as well as the pyrophosphate-dependent phosphorylation of a specific serine residue in HPr, a phosphocarrier protein of the phosphoenolpyruvate-dependent sugar phosphotransferase system (PTS). HprK/P also catalyzes the pyrophosphate-producing, inorganic phosphate-dependent dephosphorylation (phosphorolysis) of seryl-phosphorylated HPr (P-Ser-HPr). In Stenotrophomonas maltophilia (strain K279a), this protein is HPr kinase/phosphorylase.